The primary structure comprises 288 residues: Co-chaperone protein DjlA (288 aa).

Topologically, residues 1–6 are periplasmic; that stretch reads MEFIGK. A helical membrane pass occupies residues 7 to 30; that stretch reads IIGVFLGWKVGGFFGAIAGLILGS. Residues 31-288 are Cytoplasmic-facing; sequence IADKKLYELG…DLICKAKGWK (258 aa). The 67-residue stretch at 222–288 folds into the J domain; the sequence is DAYKVLGVTE…DLICKAKGWK (67 aa).

Homodimer.

It is found in the cell inner membrane. In terms of biological role, regulatory DnaK co-chaperone. Direct interaction between DnaK and DjlA is needed for the induction of the wcaABCDE operon, involved in the synthesis of a colanic acid polysaccharide capsule, possibly through activation of the RcsB/RcsC phosphotransfer signaling pathway. The colanic acid capsule may help the bacterium survive conditions outside the host. The chain is Co-chaperone protein DjlA from Haemophilus influenzae (strain ATCC 51907 / DSM 11121 / KW20 / Rd).